A 253-amino-acid polypeptide reads, in one-letter code: Sortase SrtE2 (253 aa).

Over residues 1 to 11 the composition is skewed to basic and acidic residues; it reads MAATTDTEHQE. Residues 1-23 form a disordered region; that stretch reads MAATTDTEHQEQAGTGGRGRRRP. The helical transmembrane segment at 30 to 50 threads the bilayer; that stretch reads AVSVLGELLITAGLVMGLFVV. The interval 69 to 89 is disordered; it reads EKVRDDWAQDRVGGSGQDGPG. The active site involves C220.

It belongs to the bacterial sortase family. Class E subfamily.

Its subcellular location is the cell membrane. The enzyme catalyses The enzyme catalyzes a cell wall sorting reaction in which a surface protein with a sorting signal containing a LPXTG motif is cleaved between the Thr and Gly residue. The resulting threonine carboxyl end of the protein is covalently attached to a pentaglycine cross-bridge of peptidoglycan.. Functionally, transpeptidase that anchors surface proteins to the cell wall. Recognizes Leu-Ala-x-Thr-Gly and Leu-Pro-x-Thr-Gly, with a preference for the former. Unlike the S.aureus sortase it cleaves not only the Thr-Gly motif but also the Ala-X bond; an Ala-Glu bond is a better substrate than the Thr-Gly motif in vitro. Among its possible substrates are the chaplins ChpA, ChpB and ChpC; this enzyme is more important for ChpC attachment than is SrtE1. A double knockout mutant of srtE1 and srtE2 shows a developmental defect in aerial hyphae formation more dramatic than that due to chaplin deletion. The polypeptide is Sortase SrtE2 (Streptomyces coelicolor (strain ATCC BAA-471 / A3(2) / M145)).